The chain runs to 93 residues: Islet amyloid polypeptide (93 aa).

The signal sequence occupies residues 1 to 23 (MMCISKLPAVLLILSVALNHLRA). Positions 24–35 (TPVRSGSNPQMD) are excised as a propeptide. Cysteine 39 and cysteine 44 are oxidised to a cystine. The segment at 64-93 (LPPTNVGSNTYGKRNAAGDPNRESLDFLLV) is disordered. Tyrosine 74 carries the post-translational modification Tyrosine amide. Positions 78–93 (NAAGDPNRESLDFLLV) are excised as a propeptide. The span at 83 to 93 (PNRESLDFLLV) shows a compositional bias: basic and acidic residues.

Belongs to the calcitonin family. In terms of assembly, can form homodimers. Interacts with IDE and INS. Interaction with INS inhibits homodimerization and fibril formation.

It is found in the secreted. Functionally, amylin/IAPP is a glucoregulatory peptide hormone that plays an important role in the regulation of energy homeostasis. Selectively inhibits insulin-stimulated glucose utilization and glycogen deposition in muscle, while not affecting adipocyte glucose metabolism. IAPP function is mediated by the CALCR-RAMPs (AMYRs) receptor complexes. Amylin can also bind CALCR receptor in the absence of RAMPs, although it is more selective for AMYRs. This Mus musculus (Mouse) protein is Islet amyloid polypeptide.